The following is a 481-amino-acid chain: Wax ester synthase/diacylglycerol acyltransferase 1 (481 aa).

The Cytoplasmic portion of the chain corresponds to 1-185 (MKAEKVMERE…TTATKKPADS (185 aa)). The Proton acceptor role is filled by H147. The helical transmembrane segment at 186-206 (MAWWLFVGFWFMIRVTFTTIV) threads the bilayer. The Lumenal segment spans residues 207-481 (EFSKLMLTVC…QGEIFHKTEV (275 aa)).

The protein in the N-terminal section; belongs to the long-chain O-acyltransferase family. Expressed in flowers, siliques, top parts of stems, and leaves. Not found in roots, seeds and young seedlings.

Its subcellular location is the cell membrane. It is found in the endoplasmic reticulum membrane. The enzyme catalyses a long chain fatty alcohol + a fatty acyl-CoA = a wax ester + CoA. It carries out the reaction an acyl-CoA + a 1,2-diacyl-sn-glycerol = a triacyl-sn-glycerol + CoA. It participates in glycerolipid metabolism; triacylglycerol biosynthesis. Its pathway is lipid metabolism. Functionally, bifunctional wax ester synthase/diacylglycerol acyltransferase. Involved in cuticular wax biosynthesis. Required to reduce leaf water loss, especially during drought. The protein is Wax ester synthase/diacylglycerol acyltransferase 1 of Arabidopsis thaliana (Mouse-ear cress).